Consider the following 268-residue polypeptide: NH(3)-dependent NAD(+) synthetase (268 aa).

46 to 53 (GISGGQDS) provides a ligand contact to ATP. Mg(2+) is bound at residue Asp52. Arg140 contributes to the deamido-NAD(+) binding site. Residue Thr160 participates in ATP binding. Mg(2+) is bound at residue Glu165. Residues Lys173 and Asp180 each contribute to the deamido-NAD(+) site. 2 residues coordinate ATP: Lys189 and Thr211. 260-261 (HK) is a deamido-NAD(+) binding site.

This sequence belongs to the NAD synthetase family. Homodimer.

It carries out the reaction deamido-NAD(+) + NH4(+) + ATP = AMP + diphosphate + NAD(+) + H(+). It functions in the pathway cofactor biosynthesis; NAD(+) biosynthesis; NAD(+) from deamido-NAD(+) (ammonia route): step 1/1. In terms of biological role, catalyzes the ATP-dependent amidation of deamido-NAD to form NAD. Uses ammonia as a nitrogen source. The polypeptide is NH(3)-dependent NAD(+) synthetase (Buchnera aphidicola subsp. Schizaphis graminum (strain Sg)).